We begin with the raw amino-acid sequence, 371 residues long: 4-hydroxy-3-methylbut-2-en-1-yl diphosphate synthase (flavodoxin) (371 aa).

The [4Fe-4S] cluster site is built by C268, C271, C303, and E310.

This sequence belongs to the IspG family. The cofactor is [4Fe-4S] cluster.

The enzyme catalyses (2E)-4-hydroxy-3-methylbut-2-enyl diphosphate + oxidized [flavodoxin] + H2O + 2 H(+) = 2-C-methyl-D-erythritol 2,4-cyclic diphosphate + reduced [flavodoxin]. It participates in isoprenoid biosynthesis; isopentenyl diphosphate biosynthesis via DXP pathway; isopentenyl diphosphate from 1-deoxy-D-xylulose 5-phosphate: step 5/6. Converts 2C-methyl-D-erythritol 2,4-cyclodiphosphate (ME-2,4cPP) into 1-hydroxy-2-methyl-2-(E)-butenyl 4-diphosphate. This chain is 4-hydroxy-3-methylbut-2-en-1-yl diphosphate synthase (flavodoxin), found in Macrococcus caseolyticus (strain JCSC5402) (Macrococcoides caseolyticum).